The primary structure comprises 324 residues: MLEQGLLVTAGVAFLISVALSPLFIPFLRKLKFGQSIRDEGPKSHQKKSGTPTMGGIVIYVSMMVTTLIMAIKFNNLGAEVSLLLLVTFGYGLIGFLDDYIKVVKKRNLGLTSKQKLIGQLVIAIAFFLIGKGQAFHTYIMIPGTDVKFELGWAYFVLVLFMLIGGSNAVNLTDGLDGLLSGTAAIAFGAFSIIAVAQEQFGVAIFCMAVVGAVLGFLVFNANPAKVFMGDTGSLALGGAIAAVAILLKQELLLVIIGGVFVAETLSVIIQVISFKTTGKRVFKMSPLHHHYELCGWSEWRVVVTFWSVGFLLAVLGIYIGVWM.

The next 10 membrane-spanning stretches (helical) occupy residues 5-25, 52-72, 77-97, 122-142, 149-169, 176-196, 201-221, 227-247, 253-273, and 302-322; these read GLLV…PLFI, PTMG…IMAI, LGAE…IGFL, VIAI…YIMI, FELG…GSNA, LDGL…IIAV, FGVA…LVFN, VFMG…VAIL, LLVI…IQVI, and VVVT…YIGV.

It belongs to the glycosyltransferase 4 family. MraY subfamily. Mg(2+) is required as a cofactor.

It is found in the cell membrane. The enzyme catalyses UDP-N-acetyl-alpha-D-muramoyl-L-alanyl-gamma-D-glutamyl-meso-2,6-diaminopimeloyl-D-alanyl-D-alanine + di-trans,octa-cis-undecaprenyl phosphate = di-trans,octa-cis-undecaprenyl diphospho-N-acetyl-alpha-D-muramoyl-L-alanyl-D-glutamyl-meso-2,6-diaminopimeloyl-D-alanyl-D-alanine + UMP. The protein operates within cell wall biogenesis; peptidoglycan biosynthesis. Catalyzes the initial step of the lipid cycle reactions in the biosynthesis of the cell wall peptidoglycan: transfers peptidoglycan precursor phospho-MurNAc-pentapeptide from UDP-MurNAc-pentapeptide onto the lipid carrier undecaprenyl phosphate, yielding undecaprenyl-pyrophosphoryl-MurNAc-pentapeptide, known as lipid I. The chain is Phospho-N-acetylmuramoyl-pentapeptide-transferase from Bacillus mycoides (strain KBAB4) (Bacillus weihenstephanensis).